A 188-amino-acid chain; its full sequence is Elongation factor P (188 aa).

It belongs to the elongation factor P family.

It localises to the cytoplasm. It participates in protein biosynthesis; polypeptide chain elongation. Involved in peptide bond synthesis. Stimulates efficient translation and peptide-bond synthesis on native or reconstituted 70S ribosomes in vitro. Probably functions indirectly by altering the affinity of the ribosome for aminoacyl-tRNA, thus increasing their reactivity as acceptors for peptidyl transferase. The polypeptide is Elongation factor P (Nitrobacter winogradskyi (strain ATCC 25391 / DSM 10237 / CIP 104748 / NCIMB 11846 / Nb-255)).